Here is a 310-residue protein sequence, read N- to C-terminus: Pantothenate kinase (310 aa).

Residue 95 to 102 (GSVAVGKS) coordinates ATP.

This sequence belongs to the prokaryotic pantothenate kinase family.

The protein resides in the cytoplasm. It carries out the reaction (R)-pantothenate + ATP = (R)-4'-phosphopantothenate + ADP + H(+). Its pathway is cofactor biosynthesis; coenzyme A biosynthesis; CoA from (R)-pantothenate: step 1/5. The polypeptide is Pantothenate kinase (Rhodococcus erythropolis (strain PR4 / NBRC 100887)).